A 390-amino-acid chain; its full sequence is Magnesium-protoporphyrin IX monomethyl ester [oxidative] cyclase (390 aa).

Belongs to the AcsF family. It depends on Fe cation as a cofactor.

The catalysed reaction is Mg-protoporphyrin IX 13-monomethyl ester + 3 NADPH + 3 O2 + 2 H(+) = 3,8-divinyl protochlorophyllide a + 3 NADP(+) + 5 H2O. It participates in porphyrin-containing compound metabolism; chlorophyll biosynthesis (light-independent). Functionally, catalyzes the formation of the isocyclic ring in chlorophyll biosynthesis. Mediates the cyclase reaction, which results in the formation of divinylprotochlorophyllide (Pchlide) characteristic of all chlorophylls from magnesium-protoporphyrin IX 13-monomethyl ester (MgPMME). This Prochlorococcus marinus subsp. pastoris (strain CCMP1986 / NIES-2087 / MED4) protein is Magnesium-protoporphyrin IX monomethyl ester [oxidative] cyclase.